We begin with the raw amino-acid sequence, 370 residues long: Protein RecA (370 aa).

The interval 1-20 (MSFEERRKKDSKESSSKEKD) is disordered. ATP is bound at residue 78–85 (GPESSGKT).

Belongs to the RecA family.

It is found in the cytoplasm. In terms of biological role, can catalyze the hydrolysis of ATP in the presence of single-stranded DNA, the ATP-dependent uptake of single-stranded DNA by duplex DNA, and the ATP-dependent hybridization of homologous single-stranded DNAs. It interacts with LexA causing its activation and leading to its autocatalytic cleavage. This is Protein RecA from Prochlorococcus marinus (strain MIT 9515).